Reading from the N-terminus, the 108-residue chain is Translation initiation factor 1A (108 aa).

Residues 11–85 form the S1-like domain; sequence PSRDVPKPEE…NRCDILYKYG (75 aa).

This sequence belongs to the eIF-1A family.

Functionally, seems to be required for maximal rate of protein biosynthesis. Enhances ribosome dissociation into subunits and stabilizes the binding of the initiator Met-tRNA(I) to 40 S ribosomal subunits. This chain is Translation initiation factor 1A (eIF1A), found in Saccharolobus islandicus (strain Y.N.15.51 / Yellowstone #2) (Sulfolobus islandicus).